The following is a 172-amino-acid chain: Small ribosomal subunit protein uS5 (172 aa).

The S5 DRBM domain maps to 13–76 (LIEKMVAVNR…DQARRSMIKV (64 aa)).

Belongs to the universal ribosomal protein uS5 family. Part of the 30S ribosomal subunit. Contacts proteins S4 and S8.

Functionally, with S4 and S12 plays an important role in translational accuracy. In terms of biological role, located at the back of the 30S subunit body where it stabilizes the conformation of the head with respect to the body. In Neisseria gonorrhoeae (strain ATCC 700825 / FA 1090), this protein is Small ribosomal subunit protein uS5.